Consider the following 549-residue polypeptide: DNA ligase 1 (549 aa).

ATP is bound at residue Glu212. Lys214 acts as the N6-AMP-lysine intermediate in catalysis. Positions 219, 234, 264, 310, 387, and 393 each coordinate ATP.

The protein belongs to the ATP-dependent DNA ligase family. It depends on Mg(2+) as a cofactor.

It carries out the reaction ATP + (deoxyribonucleotide)n-3'-hydroxyl + 5'-phospho-(deoxyribonucleotide)m = (deoxyribonucleotide)n+m + AMP + diphosphate.. DNA ligase that seals nicks in double-stranded DNA during DNA replication, DNA recombination and DNA repair. This Methanosarcina barkeri (strain Fusaro / DSM 804) protein is DNA ligase 1.